A 332-amino-acid chain; its full sequence is MAVEPLRVLVTGAAGQIGYALVPMIARGVMLGANQPVILHMLDIPPAAEALNGVKMELVDAAFPLLKGVVATTDVAEACKGVNVAVMVGGFPRKEGMERKDVMPKNVSIYKSQASALEQYAAPNCKVLVVANPANTNALILKEFAPSIPEKNITCLTRLDHNRALGQISERLNAQVSDVKNVIIWGNHSSSQYPDVNPCTVKTGSGEKAVRELVADDAWLNGEFITTVQQRGAAIIKARKLSSALSAASSACDHIRDWVLGTPEGTWVSMGVYSDGSYNVPAGIIYSFPVTCKDGEWKIVQGLPIDEVSRQKMDATGAELVEEKALAYSCLT.

Residues 16–17, D43, and G90 each bind NAD(+); that span reads QI. Residue R99 coordinates oxaloacetate. NAD(+) contacts are provided by Q113 and N132. Residues N132, R163, H188, and S243 each coordinate oxaloacetate. The Proton acceptor role is filled by H188.

The protein belongs to the LDH/MDH superfamily. MDH type 2 family. As to quaternary structure, homodimer.

It is found in the cytoplasm. The catalysed reaction is (S)-malate + NAD(+) = oxaloacetate + NADH + H(+). The sequence is that of Malate dehydrogenase, cytoplasmic (NR1) from Beta vulgaris (Sugar beet).